The primary structure comprises 47 residues: Large ribosomal subunit protein bL34 (47 aa).

The protein belongs to the bacterial ribosomal protein bL34 family.

This chain is Large ribosomal subunit protein bL34 (rpmH), found in Mycolicibacterium smegmatis (strain ATCC 700084 / mc(2)155) (Mycobacterium smegmatis).